The sequence spans 166 residues: Mitochondrial fission process protein 1 (166 aa).

The next 2 membrane-spanning stretches (helical) occupy residues 34–54 (SLVP…YVLA) and 80–100 (AVVD…GFTI). Lys123 carries the N6-succinyllysine modification. Residues 129-149 (LGLLTIPIIIHPIDRSVDFLL) form a helical membrane-spanning segment.

Belongs to the MTFP1 family.

The protein resides in the mitochondrion inner membrane. In terms of biological role, involved in the mitochondrial division probably by regulating membrane fission. Loss-of-function induces the release of cytochrome c, which activates the caspase cascade and leads to apoptosis. The protein is Mitochondrial fission process protein 1 (MTFP1) of Homo sapiens (Human).